We begin with the raw amino-acid sequence, 98 residues long: NADH-ubiquinone oxidoreductase chain 4L (98 aa).

3 helical membrane-spanning segments follow: residues 1-21, 29-49, and 58-78; these read MPII…GMLI, SLLC…LMAL, and IVPI…LALL.

The protein belongs to the complex I subunit 4L family. Core subunit of respiratory chain NADH dehydrogenase (Complex I) which is composed of 45 different subunits.

It localises to the mitochondrion inner membrane. The catalysed reaction is a ubiquinone + NADH + 5 H(+)(in) = a ubiquinol + NAD(+) + 4 H(+)(out). Functionally, core subunit of the mitochondrial membrane respiratory chain NADH dehydrogenase (Complex I) which catalyzes electron transfer from NADH through the respiratory chain, using ubiquinone as an electron acceptor. Part of the enzyme membrane arm which is embedded in the lipid bilayer and involved in proton translocation. The polypeptide is NADH-ubiquinone oxidoreductase chain 4L (MT-ND4L) (Colobus guereza (Mantled guereza)).